We begin with the raw amino-acid sequence, 375 residues long: Succinyl-diaminopimelate desuccinylase (375 aa).

Histidine 66 is a Zn(2+) binding site. Aspartate 68 is a catalytic residue. A Zn(2+)-binding site is contributed by aspartate 99. Catalysis depends on glutamate 133, which acts as the Proton acceptor. Zn(2+) is bound by residues glutamate 134, glutamate 162, and histidine 348.

Belongs to the peptidase M20A family. DapE subfamily. As to quaternary structure, homodimer. Zn(2+) is required as a cofactor. The cofactor is Co(2+).

It carries out the reaction N-succinyl-(2S,6S)-2,6-diaminopimelate + H2O = (2S,6S)-2,6-diaminopimelate + succinate. It participates in amino-acid biosynthesis; L-lysine biosynthesis via DAP pathway; LL-2,6-diaminopimelate from (S)-tetrahydrodipicolinate (succinylase route): step 3/3. Catalyzes the hydrolysis of N-succinyl-L,L-diaminopimelic acid (SDAP), forming succinate and LL-2,6-diaminopimelate (DAP), an intermediate involved in the bacterial biosynthesis of lysine and meso-diaminopimelic acid, an essential component of bacterial cell walls. In Shigella boydii serotype 18 (strain CDC 3083-94 / BS512), this protein is Succinyl-diaminopimelate desuccinylase.